The sequence spans 801 residues: Conserved oligomeric Golgi complex subunit 4 (801 aa).

The segment at 397-427 is disordered; it reads IRSPSGDGDDEENEEARQERHRLRKEAKEQK.

This sequence belongs to the COG4 family. As to quaternary structure, component of the conserved oligomeric Golgi complex which is composed of eight different subunits and is required for normal Golgi morphology and localization.

It localises to the golgi apparatus membrane. In terms of biological role, required for normal Golgi function. The sequence is that of Conserved oligomeric Golgi complex subunit 4 (cogc-4) from Caenorhabditis elegans.